We begin with the raw amino-acid sequence, 393 residues long: Formate-dependent phosphoribosylglycinamide formyltransferase (393 aa).

N(1)-(5-phospho-beta-D-ribosyl)glycinamide is bound by residues 22–23 and Glu-82; that span reads EL. ATP-binding positions include Arg-114, Lys-155, 160 to 165, 195 to 198, and Glu-203; these read SSGKGQ and EGFI. An ATP-grasp domain is found at 119-308; that stretch reads RLAAEELDLP…QFALHARAIL (190 aa). Mg(2+)-binding residues include Glu-267 and Glu-279. Residues Asp-286, Lys-356, and 363–364 contribute to the N(1)-(5-phospho-beta-D-ribosyl)glycinamide site; that span reads RR.

The protein belongs to the PurK/PurT family. In terms of assembly, homodimer.

It carries out the reaction N(1)-(5-phospho-beta-D-ribosyl)glycinamide + formate + ATP = N(2)-formyl-N(1)-(5-phospho-beta-D-ribosyl)glycinamide + ADP + phosphate + H(+). It participates in purine metabolism; IMP biosynthesis via de novo pathway; N(2)-formyl-N(1)-(5-phospho-D-ribosyl)glycinamide from N(1)-(5-phospho-D-ribosyl)glycinamide (formate route): step 1/1. Involved in the de novo purine biosynthesis. Catalyzes the transfer of formate to 5-phospho-ribosyl-glycinamide (GAR), producing 5-phospho-ribosyl-N-formylglycinamide (FGAR). Formate is provided by PurU via hydrolysis of 10-formyl-tetrahydrofolate. This Pseudomonas putida (strain ATCC 47054 / DSM 6125 / CFBP 8728 / NCIMB 11950 / KT2440) protein is Formate-dependent phosphoribosylglycinamide formyltransferase.